Consider the following 52-residue polypeptide: ATP synthase protein 8 (52 aa).

Residues 10–30 (FLMSLMIMMILIFMTINFYFF) traverse the membrane as a helical segment.

This sequence belongs to the ATPase protein 8 family. F-type ATPases have 2 components, CF(1) - the catalytic core - and CF(0) - the membrane proton channel.

The protein localises to the mitochondrion membrane. Mitochondrial membrane ATP synthase (F(1)F(0) ATP synthase or Complex V) produces ATP from ADP in the presence of a proton gradient across the membrane which is generated by electron transport complexes of the respiratory chain. F-type ATPases consist of two structural domains, F(1) - containing the extramembraneous catalytic core and F(0) - containing the membrane proton channel, linked together by a central stalk and a peripheral stalk. During catalysis, ATP synthesis in the catalytic domain of F(1) is coupled via a rotary mechanism of the central stalk subunits to proton translocation. Part of the complex F(0) domain. Minor subunit located with subunit a in the membrane. The sequence is that of ATP synthase protein 8 (MT-ATP8) from Rhipicephalus sanguineus (Brown dog tick).